The primary structure comprises 390 residues: Succinate--CoA ligase [ADP-forming] subunit beta (390 aa).

Residues 9-244 (KSLFQQYGIP…ISQEDVREAK (236 aa)) form the ATP-grasp domain. 4 residues coordinate ATP: Lys46, Glu99, Leu102, and Glu107. Mg(2+) is bound by residues Asn199 and Asp213. Residues Asn264 and 321 to 323 (GIV) contribute to the substrate site.

This sequence belongs to the succinate/malate CoA ligase beta subunit family. In terms of assembly, heterotetramer of two alpha and two beta subunits. It depends on Mg(2+) as a cofactor.

It catalyses the reaction succinate + ATP + CoA = succinyl-CoA + ADP + phosphate. The enzyme catalyses GTP + succinate + CoA = succinyl-CoA + GDP + phosphate. Its pathway is carbohydrate metabolism; tricarboxylic acid cycle; succinate from succinyl-CoA (ligase route): step 1/1. Functionally, succinyl-CoA synthetase functions in the citric acid cycle (TCA), coupling the hydrolysis of succinyl-CoA to the synthesis of either ATP or GTP and thus represents the only step of substrate-level phosphorylation in the TCA. The beta subunit provides nucleotide specificity of the enzyme and binds the substrate succinate, while the binding sites for coenzyme A and phosphate are found in the alpha subunit. This is Succinate--CoA ligase [ADP-forming] subunit beta from Hydrogenovibrio crunogenus (strain DSM 25203 / XCL-2) (Thiomicrospira crunogena).